The sequence spans 471 residues: Glutamate--tRNA ligase (471 aa).

Positions 9 to 19 match the 'HIGH' region motif; the sequence is PSPTGYLHVGG. Cysteine 98, cysteine 100, cysteine 125, and histidine 127 together coordinate Zn(2+). The short motif at 237-241 is the 'KMSKS' region element; that stretch reads KLSKR. Lysine 240 provides a ligand contact to ATP.

The protein belongs to the class-I aminoacyl-tRNA synthetase family. Glutamate--tRNA ligase type 1 subfamily. In terms of assembly, monomer. Requires Zn(2+) as cofactor.

Its subcellular location is the cytoplasm. The catalysed reaction is tRNA(Glu) + L-glutamate + ATP = L-glutamyl-tRNA(Glu) + AMP + diphosphate. In terms of biological role, catalyzes the attachment of glutamate to tRNA(Glu) in a two-step reaction: glutamate is first activated by ATP to form Glu-AMP and then transferred to the acceptor end of tRNA(Glu). This chain is Glutamate--tRNA ligase, found in Escherichia coli O157:H7.